Here is a 403-residue protein sequence, read N- to C-terminus: RNA-binding motif, single-stranded-interacting protein 1 (403 aa).

A disordered region spans residues 30–56 (PAHPMAPPSPSTTSSNNNSSSSSNSGW). The span at 40-54 (STTSSNNNSSSSSNS) shows a compositional bias: low complexity. 2 consecutive RRM domains span residues 62–135 (TNLY…MAKQ) and 141–226 (TNLY…FADG). Position 208 is a phosphothreonine (Thr208).

Its subcellular location is the nucleus. Its function is as follows. Single-stranded DNA binding protein that interacts with the region upstream of the C-myc gene. Binds specifically to the DNA sequence motif 5'-[AT]CT[AT][AT]T-3'. Probably has a role in DNA replication. In Bos taurus (Bovine), this protein is RNA-binding motif, single-stranded-interacting protein 1 (RBMS1).